A 71-amino-acid chain; its full sequence is Long neurotoxin 2 (71 aa).

Disulfide bonds link Cys3–Cys20, Cys14–Cys41, Cys26–Cys30, Cys45–Cys56, and Cys57–Cys62.

It belongs to the three-finger toxin family. Long-chain subfamily. Type II alpha-neurotoxin sub-subfamily. In terms of tissue distribution, expressed by the venom gland.

Its subcellular location is the secreted. Its function is as follows. Binds with high affinity to muscular (alpha-1/CHRNA1) and neuronal (alpha-7/CHRNA7) nicotinic acetylcholine receptor (nAChR) and inhibits acetylcholine from binding to the receptor, thereby impairing neuromuscular and neuronal transmission. The protein is Long neurotoxin 2 of Naja naja (Indian cobra).